The sequence spans 616 residues: MSEALDEKSFDAKSFLKTVTHQPGVYRMYDAVGDVIYVGKAKDLKKRLSSYFRINVAGEKTRALVKNICKVDVTVTHTETEALILEHNYIKLYLPKYNVLLRDDKSYPYIFLSNHHHPRLSIHRGTKKRKGEYFGPYPDAGAVRESLHLMQKLFPIRQCEDSVYANRSRPCLMYQIGRCLAPCVKELITEKDYEDQVSFARLFLQGKDRQVIASLVEKMEQASQSLNFEQAATFRDQIQALRRVQEQQFVSHDSEDDLDVIGIAHQNGMACIHALYIRQGKILGSRSYFPKMPSDAELTEVLSSFITQFYLNQAEGRVIPSVIILGENLGDDAAVITETLSDIAGRKIELKVNPRGNRARYLKLAQTNAMTALTSKLSHKMTIHERFSELRKALNLETISRMECFDISHTMGEKTVASCVVFNQEGPFKQDYRRYNITGITGGDDYAAMGQVLERRYGKPMEPEKIPDIIFIDGGRGQLSRAYNVVKPFMDEWPKQPLLIGIAKGVTRKAGLETLIFITGEEFSLPSDSPALHLIQHIRDESHNHAISGHRAQRAKVRKRSALEDVEGIGPKRRQALLKFMGGLHELKRASREEIAKVPGISKALAEKIYDALQHG.

One can recognise a GIY-YIG domain in the interval 21-99 (HQPGVYRMYD…IKLYLPKYNV (79 aa)). A UVR domain is found at 209-244 (RQVIASLVEKMEQASQSLNFEQAATFRDQIQALRRV).

Belongs to the UvrC family. In terms of assembly, interacts with UvrB in an incision complex.

Its subcellular location is the cytoplasm. In terms of biological role, the UvrABC repair system catalyzes the recognition and processing of DNA lesions. UvrC both incises the 5' and 3' sides of the lesion. The N-terminal half is responsible for the 3' incision and the C-terminal half is responsible for the 5' incision. This chain is UvrABC system protein C, found in Photobacterium profundum (strain SS9).